The primary structure comprises 124 residues: Small ribosomal subunit protein uS12 (124 aa).

Position 89 is a 3-methylthioaspartic acid (D89). The segment at 105 to 124 is disordered; it reads QGVKNRKQARSRYGAKKEKS. Positions 108–118 are enriched in basic residues; that stretch reads KNRKQARSRYG.

This sequence belongs to the universal ribosomal protein uS12 family. As to quaternary structure, part of the 30S ribosomal subunit. Contacts proteins S8 and S17. May interact with IF1 in the 30S initiation complex.

With S4 and S5 plays an important role in translational accuracy. Its function is as follows. Interacts with and stabilizes bases of the 16S rRNA that are involved in tRNA selection in the A site and with the mRNA backbone. Located at the interface of the 30S and 50S subunits, it traverses the body of the 30S subunit contacting proteins on the other side and probably holding the rRNA structure together. The combined cluster of proteins S8, S12 and S17 appears to hold together the shoulder and platform of the 30S subunit. In Mycobacterium avium (strain 104), this protein is Small ribosomal subunit protein uS12.